The following is a 484-amino-acid chain: Glutamate--tRNA ligase (484 aa).

The 'HIGH' region signature appears at 11–21 (PSPTGLLHIGN). The short motif at 255 to 259 (KLSKR) is the 'KMSKS' region element. Lys258 provides a ligand contact to ATP.

It belongs to the class-I aminoacyl-tRNA synthetase family. Glutamate--tRNA ligase type 1 subfamily. In terms of assembly, monomer.

The protein localises to the cytoplasm. It catalyses the reaction tRNA(Glu) + L-glutamate + ATP = L-glutamyl-tRNA(Glu) + AMP + diphosphate. In terms of biological role, catalyzes the attachment of glutamate to tRNA(Glu) in a two-step reaction: glutamate is first activated by ATP to form Glu-AMP and then transferred to the acceptor end of tRNA(Glu). This is Glutamate--tRNA ligase from Streptococcus suis (strain 98HAH33).